The primary structure comprises 101 residues: Protein RALF-like 14 (101 aa).

The first 21 residues, 1-21 (MKLLIFAVIISVVLFPVLVSS), serve as a signal peptide directing secretion. A propeptide spans 22 to 56 (RTIKCDQLSGKCINGEEKEIMNMRLGLDVSSRRIL) (removed in mature form). Residues C90 and C96 are joined by a disulfide bond.

Belongs to the plant rapid alkalinization factor (RALF) family. In terms of processing, proteolytically cleaved, probably by S1P, a subtilisin-like serine protease (subtilase).

Its subcellular location is the secreted. In terms of biological role, cell signaling peptide that may regulate plant stress, growth, and development. Mediates a rapid alkalinization of extracellular space by mediating a transient increase in the cytoplasmic Ca(2+) concentration leading to a calcium-dependent signaling events through a cell surface receptor and a concomitant activation of some intracellular mitogen-activated protein kinases. This Arabidopsis thaliana (Mouse-ear cress) protein is Protein RALF-like 14 (RALFL14).